Here is a 79-residue protein sequence, read N- to C-terminus: Acyl carrier protein (79 aa).

One can recognise a Carrier domain in the interval 1-77 (MNNVEKKIKK…KSIDYINNKN (77 aa)). Ser-37 is subject to O-(pantetheine 4'-phosphoryl)serine.

Belongs to the acyl carrier protein (ACP) family. In terms of processing, 4'-phosphopantetheine is transferred from CoA to a specific serine of apo-ACP by AcpS. This modification is essential for activity because fatty acids are bound in thioester linkage to the sulfhydryl of the prosthetic group.

The protein localises to the cytoplasm. Its pathway is lipid metabolism; fatty acid biosynthesis. In terms of biological role, carrier of the growing fatty acid chain in fatty acid biosynthesis. The protein is Acyl carrier protein of Buchnera aphidicola subsp. Schizaphis graminum (strain Sg).